A 315-amino-acid chain; its full sequence is Ribonuclease Z (315 aa).

Zn(2+)-binding residues include His62, His64, Asp66, His67, His144, Asp215, and His273. Residue Asp66 is the Proton acceptor of the active site.

Belongs to the RNase Z family. Homodimer. Zn(2+) is required as a cofactor.

The catalysed reaction is Endonucleolytic cleavage of RNA, removing extra 3' nucleotides from tRNA precursor, generating 3' termini of tRNAs. A 3'-hydroxy group is left at the tRNA terminus and a 5'-phosphoryl group is left at the trailer molecule.. Functionally, zinc phosphodiesterase, which displays some tRNA 3'-processing endonuclease activity. Probably involved in tRNA maturation, by removing a 3'-trailer from precursor tRNA. In Synechococcus sp. (strain CC9311), this protein is Ribonuclease Z.